A 208-amino-acid polypeptide reads, in one-letter code: Flavin-dependent thymidylate synthase (208 aa).

The 208-residue stretch at 1–208 (MEVICKHYTP…QYLFEDCLKH (208 aa)) folds into the ThyX domain. FAD is bound by residues Ser50 and 74–76 (RHR). Residues 71-74 (ELSR), 84-86 (SSR), and Lys147 each bind dUMP. A ThyX motif motif is present at residues 74 to 84 (RHRIASLSVKS). Residues 163-165 (NAR) and Asn169 contribute to the FAD site. Arg174 is a binding site for dUMP. The active-site Involved in ionization of N3 of dUMP, leading to its activation is the Arg174.

Belongs to the thymidylate synthase ThyX family. As to quaternary structure, homotetramer. It depends on FAD as a cofactor.

It catalyses the reaction dUMP + (6R)-5,10-methylene-5,6,7,8-tetrahydrofolate + NADPH + H(+) = dTMP + (6S)-5,6,7,8-tetrahydrofolate + NADP(+). It participates in pyrimidine metabolism; dTTP biosynthesis. In terms of biological role, catalyzes the reductive methylation of 2'-deoxyuridine-5'-monophosphate (dUMP) to 2'-deoxythymidine-5'-monophosphate (dTMP) while utilizing 5,10-methylenetetrahydrofolate (mTHF) as the methyl donor, and NAD(P)H and FADH(2) as the reductant. In Helicobacter pylori (strain ATCC 700392 / 26695) (Campylobacter pylori), this protein is Flavin-dependent thymidylate synthase.